An 89-amino-acid polypeptide reads, in one-letter code: Putative regulatory protein CYB_0055 (89 aa).

This sequence belongs to the RemA family.

The protein is Putative regulatory protein CYB_0055 of Synechococcus sp. (strain JA-2-3B'a(2-13)) (Cyanobacteria bacterium Yellowstone B-Prime).